A 224-amino-acid polypeptide reads, in one-letter code: UPF0758 protein VFMJ11_0123 (224 aa).

The MPN domain occupies 102-224 (ALTSPEHTKR…IVSFAERGWI (123 aa)). Positions 173, 175, and 186 each coordinate Zn(2+). A JAMM motif motif is present at residues 173-186 (HNHPSGVAEPSQAD).

This sequence belongs to the UPF0758 family.

In Aliivibrio fischeri (strain MJ11) (Vibrio fischeri), this protein is UPF0758 protein VFMJ11_0123.